Here is a 192-residue protein sequence, read N- to C-terminus: uncharacterized protein (192 aa).

The Nudix hydrolase domain occupies 29 to 160 (QRQAAVLVPI…PLDIHRRGND (132 aa)). The Nudix box motif lies at 67–89 (GAVDNTDATLIAAALREAQEEVA). Mg(2+) is bound by residues E83 and E87.

It belongs to the Nudix hydrolase family. PCD1 subfamily. The cofactor is Mn(2+). Mg(2+) is required as a cofactor.

Probably mediates the hydrolysis of some nucleoside diphosphate derivatives. This is an uncharacterized protein from Klebsiella pneumoniae (strain 342).